The primary structure comprises 853 residues: Deubiquitinase otu (853 aa).

Residues 1-20 (MDMQVQRPITSGSRQAPDPY) are disordered. An OTU domain is found at 29-150 (LYRKHTARDA…ENHFDSVYDV (122 aa)). The active site involves D37. The active-site Nucleophile is the S40. The active site involves H143. The region spanning 336–396 (NFKVGAKCKV…HPLPPDEYRP (61 aa)) is the Tudor domain. The tract at residues 396 to 853 (PWSLPFRYHR…AAVYAATRHH (458 aa)) is LC domain. Residues 460–470 (QDDEQRDHNDP) are compositionally biased toward basic and acidic residues. Disordered stretches follow at residues 460-531 (QDDE…YVPM), 681-704 (AVES…LEKS), 732-794 (GPAA…AAQG), and 817-853 (NMDP…TRHH). Over residues 499–517 (SRVQPQNSSSSQNQEVSGS) the composition is skewed to low complexity. Residues 747 to 758 (NGSQFSFYTTPS) show a composition bias toward polar residues. The segment covering 769–778 (LLQPPPPPPI) has biased composition (pro residues). Low complexity-rich tracts occupy residues 783–794 (AGPPQLGGAAQG) and 820–838 (PSAQ…APLS).

In terms of assembly, self aggregates, forming amyloid-like fibrillar helical structures; protein aggregation is mediated by the C-terminal LC domain, is enhanced by RNA binding and is essential for deubiquitinase activity. Interacts (via OTU domain) with bam (via C-terminus); the interaction enhances otu aggregation and deubiquitinase activity. Together with bam interacts with CycA/cyclin-A; the interaction stabilizes CycA by promoting its deubiquitination. Together with bam interacts with Traf6. Interacts with Hrb27C; the interaction is RNA-independent. Associates (via N-terminus) with mRNP complexes; the interaction is weak. Expressed at high levels in the ovary, at low levels in the brain and fat body, and at moderate levels in the gut.

It localises to the cytoplasm. Its subcellular location is the cell cortex. The protein localises to the perinuclear region. Its activity is regulated as follows. Activated by protein aggregation, which is mediated by the LC domain and enhanced by RNA binding. Functionally, catalytic component of a deubiquitinase complex consisting of bam and otu. The complex deubiquitinates K63-linked polyubiquitinated proteins; this antagonizes the ubiquitination activity of Traf6 and regulates the IMD immune signaling pathway. Otu-bam deubiquitinase activity is regulated by Traf6 dependent immune signaling regulation of bam expression levels; this forms a feedback loop that regulates the IMD immune signaling pathway and balances gut immune activity during aging. The complex deubiquitinates and stabilizes CycA/cyclin-A to regulate CycA-dependent differentiation. Involved in grk mRNA localization to the dorsal anterior region of the oocyte required for dorsal-ventral axis determination; may function as a ribonuclear protein complex together with sqd and Hrb27C. May regulate actin cytoskeleton organization in differentiating cystocytes during fusome maturation; required for efficient nurse cell cytoplasmic dumping during oogenesis. Essential for female fertility; involved in germ cell proliferation and germ cell differentiation. Involved in the early stages of germ cell proliferation and differentiation during oogenesis. Required for polytene chromosome dispersal in nurse cells during oogenesis. Its function is as follows. Involved in the later stages of germ cell proliferation and differentiation during oogenesis. The chain is Deubiquitinase otu from Drosophila melanogaster (Fruit fly).